The primary structure comprises 200 residues: Protein GrpE (200 aa).

The span at 1 to 11 (MSNQTNKAQDN) shows a compositional bias: polar residues. The tract at residues 1–29 (MSNQTNKAQDNQVEEIVEGELLNENGTEA) is disordered.

The protein belongs to the GrpE family. In terms of assembly, homodimer.

The protein resides in the cytoplasm. Participates actively in the response to hyperosmotic and heat shock by preventing the aggregation of stress-denatured proteins, in association with DnaK and GrpE. It is the nucleotide exchange factor for DnaK and may function as a thermosensor. Unfolded proteins bind initially to DnaJ; upon interaction with the DnaJ-bound protein, DnaK hydrolyzes its bound ATP, resulting in the formation of a stable complex. GrpE releases ADP from DnaK; ATP binding to DnaK triggers the release of the substrate protein, thus completing the reaction cycle. Several rounds of ATP-dependent interactions between DnaJ, DnaK and GrpE are required for fully efficient folding. The sequence is that of Protein GrpE from Shewanella halifaxensis (strain HAW-EB4).